Here is a 52-residue protein sequence, read N- to C-terminus: Large ribosomal subunit protein bL33A (52 aa).

It belongs to the bacterial ribosomal protein bL33 family.

This is Large ribosomal subunit protein bL33A from Staphylococcus aureus (strain USA300).